A 315-amino-acid polypeptide reads, in one-letter code: 4-hydroxy-3-methylbut-2-enyl diphosphate reductase (315 aa).

Cys12 provides a ligand contact to [4Fe-4S] cluster. (2E)-4-hydroxy-3-methylbut-2-enyl diphosphate contacts are provided by His41 and His74. Positions 41 and 74 each coordinate dimethylallyl diphosphate. Residues His41 and His74 each contribute to the isopentenyl diphosphate site. Cys96 provides a ligand contact to [4Fe-4S] cluster. (2E)-4-hydroxy-3-methylbut-2-enyl diphosphate is bound at residue His124. Residue His124 coordinates dimethylallyl diphosphate. His124 contacts isopentenyl diphosphate. Glu126 acts as the Proton donor in catalysis. Thr168 is a binding site for (2E)-4-hydroxy-3-methylbut-2-enyl diphosphate. Cys198 provides a ligand contact to [4Fe-4S] cluster. Residues Ser226, Ser227, Asn228, and Ser270 each coordinate (2E)-4-hydroxy-3-methylbut-2-enyl diphosphate. Dimethylallyl diphosphate contacts are provided by Ser226, Ser227, Asn228, and Ser270. The isopentenyl diphosphate site is built by Ser226, Ser227, Asn228, and Ser270.

It belongs to the IspH family. The cofactor is [4Fe-4S] cluster.

The catalysed reaction is isopentenyl diphosphate + 2 oxidized [2Fe-2S]-[ferredoxin] + H2O = (2E)-4-hydroxy-3-methylbut-2-enyl diphosphate + 2 reduced [2Fe-2S]-[ferredoxin] + 2 H(+). It catalyses the reaction dimethylallyl diphosphate + 2 oxidized [2Fe-2S]-[ferredoxin] + H2O = (2E)-4-hydroxy-3-methylbut-2-enyl diphosphate + 2 reduced [2Fe-2S]-[ferredoxin] + 2 H(+). Its pathway is isoprenoid biosynthesis; dimethylallyl diphosphate biosynthesis; dimethylallyl diphosphate from (2E)-4-hydroxy-3-methylbutenyl diphosphate: step 1/1. It functions in the pathway isoprenoid biosynthesis; isopentenyl diphosphate biosynthesis via DXP pathway; isopentenyl diphosphate from 1-deoxy-D-xylulose 5-phosphate: step 6/6. In terms of biological role, catalyzes the conversion of 1-hydroxy-2-methyl-2-(E)-butenyl 4-diphosphate (HMBPP) into a mixture of isopentenyl diphosphate (IPP) and dimethylallyl diphosphate (DMAPP). Acts in the terminal step of the DOXP/MEP pathway for isoprenoid precursor biosynthesis. The chain is 4-hydroxy-3-methylbut-2-enyl diphosphate reductase from Pseudomonas putida (strain W619).